The chain runs to 349 residues: Putative inosamine-phosphate amidinotransferase 2 (349 aa).

It belongs to the amidinotransferase family.

It catalyses the reaction 1-amino-1-deoxy-scyllo-inositol 4-phosphate + L-arginine = 1-guanidino-1-deoxy-scyllo-inositol 4-phosphate + L-ornithine. The protein operates within antibiotic biosynthesis; streptomycin biosynthesis. It is not obvious if strB2 participates in streptomycin biosynthesis as an inosamine-phosphate amidinotransferase. Attempt to measure its activity have failed and the nucleophilic cysteine which is the key residue for amidine transfer is not conserved but replaced by a glycine residue. In Streptomyces griseus, this protein is Putative inosamine-phosphate amidinotransferase 2 (strB2).